A 128-amino-acid polypeptide reads, in one-letter code: Fluoride-specific ion channel FluC (128 aa).

The next 4 membrane-spanning stretches (helical) occupy residues 2-22 (LTFA…GAWL), 37-57 (WGTL…VALI), 65-85 (AWIR…FSTF), and 101-121 (AAAY…LGLA). The Na(+) site is built by G77 and T80.

Belongs to the fluoride channel Fluc/FEX (TC 1.A.43) family.

It localises to the cell inner membrane. The catalysed reaction is fluoride(in) = fluoride(out). With respect to regulation, na(+) is not transported, but it plays an essential structural role and its presence is essential for fluoride channel function. In terms of biological role, fluoride-specific ion channel. Important for reducing fluoride concentration in the cell, thus reducing its toxicity. In Bordetella bronchiseptica (strain ATCC BAA-588 / NCTC 13252 / RB50) (Alcaligenes bronchisepticus), this protein is Fluoride-specific ion channel FluC.